The primary structure comprises 287 residues: Membrane protein insertase YidC 2 (287 aa).

The first 26 residues, Met-1–Gly-26, serve as a signal peptide directing secretion. Cys-27 is lipidated: N-palmitoyl cysteine. Cys-27 carries S-diacylglycerol cysteine lipidation. Helical transmembrane passes span Tyr-65–Ile-85, Met-135–Ile-155, Tyr-178–Gly-198, Ala-207–Leu-224, and Leu-228–Phe-250.

Belongs to the OXA1/ALB3/YidC family. Type 2 subfamily.

Its subcellular location is the cell membrane. Functionally, required for the insertion and/or proper folding and/or complex formation of integral membrane proteins into the membrane. Involved in integration of membrane proteins that insert both dependently and independently of the Sec translocase complex, as well as at least some lipoproteins. The protein is Membrane protein insertase YidC 2 of Listeria monocytogenes serovar 1/2a (strain ATCC BAA-679 / EGD-e).